The primary structure comprises 338 residues: Decarboxylase macB (338 aa).

Residues His7, His9, His159, and Asp283 each contribute to the Zn(2+) site.

It belongs to the metallo-dependent hydrolases superfamily. ACMSD family.

It carries out the reaction 6-methylsalicylate + H(+) = 3-methylphenol + CO2. The protein operates within secondary metabolite biosynthesis; terpenoid biosynthesis. In terms of biological role, decarboxylase; part of the gene cluster that mediates the biosynthesis of macrophorins, isoprenoid epoxycyclohexenones containing cyclized drimane moieties. The first step of the pathway is the synthesis of 6-methylsalicylic acid (6-MSA) by the polyketide synthase macA. 6-MSA is then converted to m-cresol by the decarboxylase macB. The cytochrome P450 monooxygenase macC then catalyzes the oxidation of m-cresol to toluquinol. Epoxidation of toluquinol is then performed by the short chain dehydrogenase macD, with the help of macE, and a further prenylation by macG leads to 7-deacetoxyyanuthone A. The next step is the hydroxylation of C-22 of 7-deacetoxyyanuthone A by the cytochrome P450 monooxygenase macH to yield 22-deacetylyanuthone A. O-Mevalon transferase macI then attaches mevalon to the hydroxyl group of 22-deacetylyanuthone A to produce yanuthone E. The terpene cyclase macJ catalyzes the cyclization of 22-deacetylyanuthone A to macrophorin A. MacJ is also able to catalyze cyclization of yanuthone E and 7-deacetoxyyanuthone A to their corresponding macrophorins. The macJ products can be further modified by macH and macJ, as well as by the FAD-dependent monooxygenase macF, to produce additional macrophorins, including 4'-oxomacrophorin A, 4'-oxomacrophorin D and 4'-oxomacrophorin E. The chain is Decarboxylase macB from Penicillium terrestre.